A 514-amino-acid chain; its full sequence is 3-octaprenyl-4-hydroxybenzoate carboxy-lyase (514 aa).

Asparagine 177 lines the Mn(2+) pocket. Prenylated FMN contacts are provided by residues 180–182 (IYR), 194–196 (RWL), and 199–200 (RG). Glutamate 243 provides a ligand contact to Mn(2+). Aspartate 314 acts as the Proton donor in catalysis.

This sequence belongs to the UbiD family. In terms of assembly, homohexamer. It depends on prenylated FMN as a cofactor. Mn(2+) serves as cofactor.

The protein resides in the cell membrane. It catalyses the reaction a 4-hydroxy-3-(all-trans-polyprenyl)benzoate + H(+) = a 2-(all-trans-polyprenyl)phenol + CO2. The protein operates within cofactor biosynthesis; ubiquinone biosynthesis. In terms of biological role, catalyzes the decarboxylation of 3-octaprenyl-4-hydroxy benzoate to 2-octaprenylphenol, an intermediate step in ubiquinone biosynthesis. This Bordetella bronchiseptica (strain ATCC BAA-588 / NCTC 13252 / RB50) (Alcaligenes bronchisepticus) protein is 3-octaprenyl-4-hydroxybenzoate carboxy-lyase.